The following is a 286-amino-acid chain: Protease HtpX homolog (286 aa).

2 consecutive transmembrane segments (helical) span residues 7-27 (TFML…MIGG) and 29-49 (SGMM…YWFS). Residue His131 coordinates Zn(2+). Glu132 is a catalytic residue. A Zn(2+)-binding site is contributed by His135. Helical transmembrane passes span 146–166 (LSAT…FFGG) and 177–197 (IAGI…QMAI). Glu202 is a binding site for Zn(2+).

Belongs to the peptidase M48B family. It depends on Zn(2+) as a cofactor.

Its subcellular location is the cell inner membrane. The polypeptide is Protease HtpX homolog (Ralstonia nicotianae (strain ATCC BAA-1114 / GMI1000) (Ralstonia solanacearum)).